The chain runs to 756 residues: Cilium assembly protein DZIP1L (756 aa).

The tract at residues 1–20 (MLGQFSPGEPYTTSLSSTPP) is disordered. Positions 10 to 19 (PYTTSLSSTP) are enriched in low complexity. The stretch at 108–158 (DFLSSQLAGLEERLQAATSLVQQGEGQRAELEKSLQETKQENRRRKQLIAT) forms a coiled coil. The C2H2-type zinc finger occupies 171 to 194 (HKCQFCEKSFVNYSYLQAHVQRRH). Composition is skewed to basic and acidic residues over residues 193 to 202 (RHPEVTDAEK), 237 to 262 (NLRR…ERWK), 319 to 335 (DPEK…LRER), and 344 to 365 (RRKF…KSEN). 6 disordered regions span residues 193–212 (RHPE…EEME), 233–262 (QQAD…ERWK), 310–365 (NNAS…KSEN), 409–466 (KIKK…MRES), 531–626 (VKSL…AYIT), and 693–756 (IKTP…GTSA). Coiled-coil stretches lie at residues 196 to 283 (EVTD…FLQE) and 321 to 416 (EKEM…LSAT). A compositionally biased stretch (polar residues) spans 534–558 (LQKSSGKPTPNTLKQRGKKTSTPLN). A compositionally biased stretch (basic and acidic residues) spans 560–578 (KSLRFRQDSKASDRREKSQ). Residues 586–598 (TPTPRSKAPPPNQ) are compositionally biased toward pro residues.

This sequence belongs to the DZIP C2H2-type zinc-finger protein family.

The protein localises to the cytoplasm. It localises to the cytoskeleton. The protein resides in the cilium basal body. Its subcellular location is the microtubule organizing center. It is found in the centrosome. The protein localises to the centriole. In terms of biological role, involved in primary cilium formation. Probably acts as a transition zone protein required for localization of PKD1/PC1 and PKD2/PC2 to the ciliary membrane. The chain is Cilium assembly protein DZIP1L (dzip1l) from Danio rerio (Zebrafish).